The primary structure comprises 224 residues: 7-cyano-7-deazaguanine synthase (224 aa).

8-18 (LSGGMDSAAVI) contributes to the ATP binding site. The Zn(2+) site is built by Cys-186, Cys-196, Cys-199, and Cys-202.

Belongs to the QueC family. Zn(2+) serves as cofactor.

It carries out the reaction 7-carboxy-7-deazaguanine + NH4(+) + ATP = 7-cyano-7-deazaguanine + ADP + phosphate + H2O + H(+). It functions in the pathway purine metabolism; 7-cyano-7-deazaguanine biosynthesis. In terms of biological role, catalyzes the ATP-dependent conversion of 7-carboxy-7-deazaguanine (CDG) to 7-cyano-7-deazaguanine (preQ(0)). This Xanthomonas oryzae pv. oryzae (strain MAFF 311018) protein is 7-cyano-7-deazaguanine synthase.